Reading from the N-terminus, the 415-residue chain is Beta-1,4-glucuronyltransferase 1 (415 aa).

At 1–8 (MQMSYAIR) the chain is on the cytoplasmic side. A helical; Signal-anchor for type II membrane protein membrane pass occupies residues 9–36 (CAFYQLLLAALMLVAMLQLLYLSLLSGL). At 37-415 (HGQEEQDQYF…AKYPDSPRHC (379 aa)) the chain is on the lumenal side. N204 carries N-linked (GlcNAc...) asparagine glycosylation. Residues D227 and D229 each contribute to the Mn(2+) site. An N-linked (GlcNAc...) asparagine glycan is attached at N300.

Belongs to the glycosyltransferase 49 family. In terms of assembly, interacts with LARGE1 and LARGE2. Mn(2+) serves as cofactor.

It localises to the golgi apparatus membrane. It catalyses the reaction 3-O-[beta-D-Xyl-(1-&gt;4)-Rib-ol-P-Rib-ol-P-3-beta-D-GalNAc-(1-&gt;3)-beta-D-GlcNAc-(1-&gt;4)-(O-6-P-alpha-D-Man)]-Thr-[protein] + UDP-alpha-D-glucuronate = 3-O-[beta-D-GlcA-(1-&gt;3)-beta-D-Xyl-(1-&gt;4)-Rib-ol-P-Rib-ol-P-3-beta-D-GalNAc-(1-&gt;3)-beta-D-GlcNAc-(1-&gt;4)-(O-6-P-alpha-D-Man)]-Thr-[protein] + UDP + H(+). It participates in protein modification; protein glycosylation. In terms of biological role, beta-1,4-glucuronyltransferase involved in O-mannosylation of alpha-dystroglycan (DAG1). Transfers a glucuronic acid (GlcA) residue onto a xylose (Xyl) acceptor to produce the glucuronyl-beta-1,4-xylose-beta disaccharide primer, which is further elongated by LARGE1, during synthesis of phosphorylated O-mannosyl glycan. Phosphorylated O-mannosyl glycan is a carbohydrate structure present in alpha-dystroglycan (DAG1), which is required for binding laminin G-like domain-containing extracellular proteins with high affinity. Required for axon guidance; via its function in O-mannosylation of alpha-dystroglycan (DAG1). This chain is Beta-1,4-glucuronyltransferase 1, found in Bos taurus (Bovine).